A 302-amino-acid polypeptide reads, in one-letter code: Phosphatidylglycerol--prolipoprotein diacylglyceryl transferase (302 aa).

3 helical membrane passes run 26–46 (WYAL…VMLV), 67–87 (LVLW…VLFY), and 108–128 (IWEG…AIVL). Residue Arg-156 participates in a 1,2-diacyl-sn-glycero-3-phospho-(1'-sn-glycerol) binding. Helical transmembrane passes span 231–251 (GALV…LEGV) and 263–283 (LGLT…VWLL).

The protein belongs to the Lgt family.

The protein localises to the cell inner membrane. It catalyses the reaction L-cysteinyl-[prolipoprotein] + a 1,2-diacyl-sn-glycero-3-phospho-(1'-sn-glycerol) = an S-1,2-diacyl-sn-glyceryl-L-cysteinyl-[prolipoprotein] + sn-glycerol 1-phosphate + H(+). It functions in the pathway protein modification; lipoprotein biosynthesis (diacylglyceryl transfer). Catalyzes the transfer of the diacylglyceryl group from phosphatidylglycerol to the sulfhydryl group of the N-terminal cysteine of a prolipoprotein, the first step in the formation of mature lipoproteins. The chain is Phosphatidylglycerol--prolipoprotein diacylglyceryl transferase from Caulobacter sp. (strain K31).